Reading from the N-terminus, the 386-residue chain is Homoserine O-succinyltransferase (386 aa).

One can recognise an AB hydrolase-1 domain in the interval 49-358; sequence NAILICHALS…DAEQGHDSFL (310 aa). Ser156 serves as the catalytic Nucleophile. Arg226 serves as a coordination point for substrate. Residues Asp321 and His354 contribute to the active site. Position 355 (Asp355) interacts with substrate.

Belongs to the AB hydrolase superfamily. MetX family. Homodimer.

It localises to the cytoplasm. It carries out the reaction L-homoserine + succinyl-CoA = O-succinyl-L-homoserine + CoA. Its pathway is amino-acid biosynthesis; L-methionine biosynthesis via de novo pathway; O-succinyl-L-homoserine from L-homoserine: step 1/1. In terms of biological role, transfers a succinyl group from succinyl-CoA to L-homoserine, forming succinyl-L-homoserine. The sequence is that of Homoserine O-succinyltransferase from Acinetobacter baumannii (strain SDF).